Reading from the N-terminus, the 411-residue chain is Na(+)-translocating NADH-quinone reductase subunit F (411 aa).

Residues Val5–Ile25 form a helical membrane-spanning segment. The 95-residue stretch at Gly36–Ile130 folds into the 2Fe-2S ferredoxin-type domain. Cys73, Cys79, Cys82, and Cys114 together coordinate [2Fe-2S] cluster. Residues Val133–Lys273 form the FAD-binding FR-type domain.

It belongs to the NqrF family. As to quaternary structure, composed of six subunits; NqrA, NqrB, NqrC, NqrD, NqrE and NqrF. [2Fe-2S] cluster is required as a cofactor. Requires FAD as cofactor.

It is found in the cell inner membrane. The enzyme catalyses a ubiquinone + n Na(+)(in) + NADH + H(+) = a ubiquinol + n Na(+)(out) + NAD(+). Functionally, NQR complex catalyzes the reduction of ubiquinone-1 to ubiquinol by two successive reactions, coupled with the transport of Na(+) ions from the cytoplasm to the periplasm. The first step is catalyzed by NqrF, which accepts electrons from NADH and reduces ubiquinone-1 to ubisemiquinone by a one-electron transfer pathway. The protein is Na(+)-translocating NADH-quinone reductase subunit F of Haemophilus influenzae (strain 86-028NP).